A 262-amino-acid polypeptide reads, in one-letter code: MTNNFMAPEAAAALLKAATADGRPIAPLRDRLAIADQDSAYAVQEINTRAWLAEGRRLVGRKIGLTSLAVQAQLGVDQPDFGMLFADMAVGDGEIVAAGRLIQPKVEAEVALILGRDLTQERHTYADLIRATEYALPSIEIVDSRIENWNIKFVDTVADNASSGLFVLGGRSVRLCDIDLTACAMEMKRGDEVVSRGNGRACLGSPLNAAIWLADVMVRCGRPLQAGDIVLTGALGPMVAVKSGERFDVSIEGLGNVSALFA.

Belongs to the hydratase/decarboxylase family. MhpD subfamily. It depends on a divalent metal cation as a cofactor.

The catalysed reaction is (S)-4-hydroxy-2-oxopentanoate = (2Z)-2-hydroxypenta-2,4-dienoate + H2O. It functions in the pathway aromatic compound metabolism; 3-phenylpropanoate degradation. Functionally, catalyzes the conversion of 2-hydroxypentadienoic acid (enolic form of 2-oxopent-4-enoate) to 4-hydroxy-2-ketopentanoic acid. In Dechloromonas aromatica (strain RCB), this protein is 2-keto-4-pentenoate hydratase 2.